The sequence spans 124 residues: Aspartate 1-decarboxylase (124 aa).

Serine 21 (schiff-base intermediate with substrate; via pyruvic acid) is an active-site residue. Serine 21 is modified (pyruvic acid (Ser)). Substrate is bound at residue threonine 53. Residue tyrosine 54 is the Proton donor of the active site. A substrate-binding site is contributed by 69-71 (GAA).

Belongs to the PanD family. Heterooctamer of four alpha and four beta subunits. Pyruvate serves as cofactor. In terms of processing, is synthesized initially as an inactive proenzyme, which is activated by self-cleavage at a specific serine bond to produce a beta-subunit with a hydroxyl group at its C-terminus and an alpha-subunit with a pyruvoyl group at its N-terminus.

It is found in the cytoplasm. It carries out the reaction L-aspartate + H(+) = beta-alanine + CO2. It functions in the pathway cofactor biosynthesis; (R)-pantothenate biosynthesis; beta-alanine from L-aspartate: step 1/1. In terms of biological role, catalyzes the pyruvoyl-dependent decarboxylation of aspartate to produce beta-alanine. In Dehalococcoides mccartyi (strain ATCC BAA-2266 / KCTC 15142 / 195) (Dehalococcoides ethenogenes (strain 195)), this protein is Aspartate 1-decarboxylase.